A 90-amino-acid chain; its full sequence is uncharacterized protein (90 aa).

The tract at residues 53–90 (WRARPDANDADTTSSSSSSETCTESDDSSDVPPARYAV) is disordered. The span at 63-74 (DTTSSSSSSETC) shows a compositional bias: low complexity.

This is an uncharacterized protein from Orgyia pseudotsugata (Douglas-fir tussock moth).